Consider the following 188-residue polypeptide: MRVIASSIRKGNVLEQDGKLYVVLSAENIHPGKGTPVSQIEMRRISDGVKISERYKTTDQVEKATIEERNYSFLYEDGEGFHFMEPESFDQVQVTKDVVGNSAPYLQEGMVVKLSMHDTVAVAITLPQRATLEVVETEPVTKGQTASSSYKPAVLSNGVRTAVPPHVGVGTRIVVLTEDGSYVERAKD.

Belongs to the elongation factor P family.

The protein resides in the cytoplasm. It functions in the pathway protein biosynthesis; polypeptide chain elongation. Functionally, involved in peptide bond synthesis. Stimulates efficient translation and peptide-bond synthesis on native or reconstituted 70S ribosomes in vitro. Probably functions indirectly by altering the affinity of the ribosome for aminoacyl-tRNA, thus increasing their reactivity as acceptors for peptidyl transferase. The sequence is that of Elongation factor P from Rhodopseudomonas palustris (strain HaA2).